A 195-amino-acid chain; its full sequence is MDRKFEVSRKTGETDITLSINIDGSGKSNISTGVGFFDHMLNLFAKHGLFDLDVKAKGDLEIDAHHTVEDVGIVLGQAIKQALGEKKSIRRYGSSFVPMDEALVLVALDLSGRPYLVFDAELKCEKLGNMETELVEEFFRAVAFNAGITLHVKALYGSNTHHIIEAMFKAFGRALDDATRKDDRIEGVMSTKGML.

Belongs to the imidazoleglycerol-phosphate dehydratase family.

Its subcellular location is the cytoplasm. It catalyses the reaction D-erythro-1-(imidazol-4-yl)glycerol 3-phosphate = 3-(imidazol-4-yl)-2-oxopropyl phosphate + H2O. It functions in the pathway amino-acid biosynthesis; L-histidine biosynthesis; L-histidine from 5-phospho-alpha-D-ribose 1-diphosphate: step 6/9. This Acetivibrio thermocellus (strain ATCC 27405 / DSM 1237 / JCM 9322 / NBRC 103400 / NCIMB 10682 / NRRL B-4536 / VPI 7372) (Clostridium thermocellum) protein is Imidazoleglycerol-phosphate dehydratase.